The sequence spans 39 residues: Photosystem II reaction center protein Psb30 (39 aa).

The helical transmembrane segment at 12 to 32 (IFQLTFVGLIVIAGPIVIAVL) threads the bilayer.

Belongs to the Psb30/Ycf12 family. PSII is composed of 1 copy each of membrane proteins PsbA, PsbB, PsbC, PsbD, PsbE, PsbF, PsbH, PsbI, PsbJ, PsbK, PsbL, PsbM, PsbT, PsbX, PsbY, PsbZ, Psb30/Ycf12, peripheral proteins PsbO, CyanoQ (PsbQ), PsbU, PsbV and a large number of cofactors. It forms dimeric complexes.

It localises to the cellular thylakoid membrane. Its function is as follows. A core subunit of photosystem II (PSII), probably helps stabilize the reaction center. This is Photosystem II reaction center protein Psb30 from Crocosphaera subtropica (strain ATCC 51142 / BH68) (Cyanothece sp. (strain ATCC 51142)).